We begin with the raw amino-acid sequence, 505 residues long: tRNA-2-methylthio-N(6)-dimethylallyladenosine synthase (505 aa).

Positions 14–132 (RTYEVRTYGC…LPVLLERARV (119 aa)) constitute an MTTase N-terminal domain. Residues cysteine 23, cysteine 61, cysteine 95, cysteine 169, cysteine 173, and cysteine 176 each contribute to the [4Fe-4S] cluster site. Residues 155 to 386 (RESAYAAWVS…ALQEEISWDE (232 aa)) enclose the Radical SAM core domain. In terms of domain architecture, TRAM spans 388–456 (KKQVGRTLEL…PHHLLAEGAV (69 aa)).

It belongs to the methylthiotransferase family. MiaB subfamily. In terms of assembly, monomer. The cofactor is [4Fe-4S] cluster.

It localises to the cytoplasm. It carries out the reaction N(6)-dimethylallyladenosine(37) in tRNA + (sulfur carrier)-SH + AH2 + 2 S-adenosyl-L-methionine = 2-methylsulfanyl-N(6)-dimethylallyladenosine(37) in tRNA + (sulfur carrier)-H + 5'-deoxyadenosine + L-methionine + A + S-adenosyl-L-homocysteine + 2 H(+). Its function is as follows. Catalyzes the methylthiolation of N6-(dimethylallyl)adenosine (i(6)A), leading to the formation of 2-methylthio-N6-(dimethylallyl)adenosine (ms(2)i(6)A) at position 37 in tRNAs that read codons beginning with uridine. The chain is tRNA-2-methylthio-N(6)-dimethylallyladenosine synthase from Streptomyces coelicolor (strain ATCC BAA-471 / A3(2) / M145).